Consider the following 181-residue polypeptide: NADH-quinone oxidoreductase subunit B (181 aa).

Residues C45, C46, C111, and C140 each coordinate [4Fe-4S] cluster.

Belongs to the complex I 20 kDa subunit family. In terms of assembly, NDH-1 is composed of 14 different subunits. Subunits NuoB, C, D, E, F, and G constitute the peripheral sector of the complex. [4Fe-4S] cluster is required as a cofactor.

The protein localises to the cell inner membrane. It carries out the reaction a quinone + NADH + 5 H(+)(in) = a quinol + NAD(+) + 4 H(+)(out). NDH-1 shuttles electrons from NADH, via FMN and iron-sulfur (Fe-S) centers, to quinones in the respiratory chain. The immediate electron acceptor for the enzyme in this species is believed to be a menaquinone. Couples the redox reaction to proton translocation (for every two electrons transferred, four hydrogen ions are translocated across the cytoplasmic membrane), and thus conserves the redox energy in a proton gradient. This chain is NADH-quinone oxidoreductase subunit B, found in Flavobacterium psychrophilum (strain ATCC 49511 / DSM 21280 / CIP 103535 / JIP02/86).